The sequence spans 178 residues: Gamma-crystallin M1 (178 aa).

2 Beta/gamma crystallin 'Greek key' domains span residues 2–40 (GKIIFYDDRNFQGRSYDCMSDCSDISSYLSRVGSIRVES) and 41–86 (GCFM…RMIP). The interval 87–91 (PYRGS) is connecting peptide. Beta/gamma crystallin 'Greek key' domains are found at residues 92–132 (YRMR…HVMD) and 133–175 (GHWL…RRIT).

This sequence belongs to the beta/gamma-crystallin family. As to quaternary structure, monomer.

Crystallins are the dominant structural components of the vertebrate eye lens. The protein is Gamma-crystallin M1 of Cyprinus carpio (Common carp).